The following is a 455-amino-acid chain: MVQAMIDMDIMKGILEDSVSSSEFDESRDDETDAPTLEDEQLSEPAEPPADERIRGTQSAQGIPPPLGRIPKKSQGRSQLRSEIQFCSPLSRPRSPSPVNRYGKKIKFGTAGQNTRPPPEKRPRRRPRDRLQYGRTTRGGQCRAAPKRATRRPQVNCQRQDDDVRQGVSDAVKKLRLPASMIIDGESPRFDDSIIPRHHGACFNVFIPAPPSHVPEVFTDRDITALIRAGGKDDELINKKISAKKIDHLHRQMLSFVTSRHNQAYWVSCRRETAAAGGLQTLGAFVEEQMTWAQTVVRHGGWFDEKDIDIILDTAIFVCNAFVTRFRLLHLSCVFDKQSELALIKQVAYLVAMGNRLVEACNLLGEVKLNFRGGLLLAFVLTIPGMQSRRSISARGQELFRTLLEYYRPGDVMGLLNVIVMEHHSLCRNSECAAATRAAMGSAKFNKGLFFYPLS.

The segment at 17–163 (DSVSSSEFDE…QVNCQRQDDD (147 aa)) is disordered. Residues 23–42 (EFDESRDDETDAPTLEDEQL) are compositionally biased toward acidic residues. The span at 88–98 (SPLSRPRSPSP) shows a compositional bias: low complexity. 3 short sequence motifs (nuclear localization signal) span residues 101–107 (RYGKKIK), 121–130 (KRPRRRPRDR), and 143–152 (RAAPKRATRR). C333, H423, C427, and C432 together coordinate Zn(2+). The segment at 333 to 432 (CVFDKQSELA…HHSLCRNSEC (100 aa)) adopts a CHC2-type zinc-finger fold.

Belongs to the HHV-1 ICP27 protein family. Homodimer. Homodimerization is required for transactivation. Interacts with host ALYREF. Associates in a complex with RNA, and host export factors NXF1/TAP and ALYREF; these interactions allow nuclear export of viral transcripts. Interacts with protein K-bZIP/K8; this interaction promotes viral gene expression during lytic infection. Interacts with host PABPC1. Interacts with host AGO2 and TNRC6A; these interactions inhibit host P-body formation. Interacts with PRKRA and EIF2AK2/PKR; these interactions inhibit host stress granule formation. In terms of processing, proteolytically cleaved by host caspase-7 (CASP7), leading to its inactivation, thereby preventing expression of viral lytic genes.

The protein resides in the host cytoplasm. It localises to the host nucleus. Post-transcriptional regulator that plays an essential role in the expression of viral lytic genes and productive viral replication. Possesses numerous activities that promote the expression of viral genes including enhancement of RNA stability, promotion of RNA splicing and stimulation of protein translation often via its ability to interact with different cellular cofactors. Stabilizes polyadenylated nuclear (PAN) RNA by cooperative binding to a 9-nt core of the MRE (MTA responsive element) together with host PABPC1. Functions as a viral splicing factor and promotes expression of intron-containing viral lytic genes. Protects viral transcripts from specific nuclear RNA decay pathways by preventing host MTREX recruitment that promotes unwinding and degradation of structured RNA substrates. Plays a role in the inhibition of host P-body formation by altering the scaffolding activity of TNRC6A at the initial stage thereby enhancing virus production. Also inhibits host stress granule formation by blocking autophosphorylation of EIF2AK2/PKR and its subsequent binding to dsRNA. The polypeptide is Post-transcriptional regulator MTA (Human herpesvirus 8 type P (isolate GK18) (HHV-8)).